The chain runs to 631 residues: Chaperone protein DnaK (631 aa).

T198 bears the Phosphothreonine; by autocatalysis mark. A disordered region spans residues 598 to 631 (YSAQQGGEQPGAAKKDDVVDAEFTEVDDDKKKSA).

The protein belongs to the heat shock protein 70 family.

Functionally, acts as a chaperone. The polypeptide is Chaperone protein DnaK (Azorhizobium caulinodans (strain ATCC 43989 / DSM 5975 / JCM 20966 / LMG 6465 / NBRC 14845 / NCIMB 13405 / ORS 571)).